A 393-amino-acid polypeptide reads, in one-letter code: Telomeric repeat-binding factor 2-interacting protein 1 (393 aa).

Ala2 carries the post-translational modification N-acetylalanine. Ser36 and Ser43 each carry phosphoserine. A BRCT domain is found at 78–101 (FISTQYILDCVDRNEKLDLEAYRL). A disordered region spans residues 104–132 (TEQASDPKPGASTEGSTEPEPQPLTGRIA). Lys111 is covalently cross-linked (Glycyl lysine isopeptide (Lys-Gly) (interchain with G-Cter in SUMO2)). Residues 125-185 (QPLTGRIAYT…SLKDRYLKHL (61 aa)) enclose the Myb-like domain. A phosphoserine mark is found at Ser151 and Ser153. Residue Lys191 forms a Glycyl lysine isopeptide (Lys-Gly) (interchain with G-Cter in SUMO2) linkage. A disordered region spans residues 193-304 (LLGNAPVSPS…EEEPKVSTQE (112 aa)). 2 positions are modified to phosphoserine: Ser200 and Ser203. Glycyl lysine isopeptide (Lys-Gly) (interchain with G-Cter in SUMO2) cross-links involve residues Lys205, Lys209, and Lys237. Over residues 223–252 (QNKRAPDLPEEECVKGEIKENGEADNKLFE) the composition is skewed to basic and acidic residues. Acidic residues predominate over residues 282-297 (TPEEDSETQPDEEEEE). Lys366 participates in a covalent cross-link: Glycyl lysine isopeptide (Lys-Gly) (interchain with G-Cter in SUMO2). The Nuclear localization signal motif lies at 377-393 (KKFGAQNVARRIEFRKK).

This sequence belongs to the RAP1 family. In terms of assembly, homodimer. Component of the shelterin complex (telosome) composed of TERF1, TERF2, TINF2, TERF2IP ACD and POT1. Binds to TERF2 (but not TERF1) with its C-terminus. Interacts with SLX4/BTBD12. Interacts with TERF2; the interaction is direct. Does not interact with TERF1. Associates with the I-kappa-B-kinase (IKK) core complex, composed of CHUK, IKBKB and IKBKG.

It is found in the nucleus. It localises to the cytoplasm. The protein localises to the chromosome. Its subcellular location is the telomere. Functionally, acts both as a regulator of telomere function and as a transcription regulator. Involved in the regulation of telomere length and protection as a component of the shelterin complex (telosome). In contrast to other components of the shelterin complex, it is dispensible for telomere capping and does not participate in the protection of telomeres against non-homologous end-joining (NHEJ)-mediated repair. Instead, it is required to negatively regulate telomere recombination and is essential for repressing homology-directed repair (HDR), which can affect telomere length. Does not bind DNA directly: recruited to telomeric double-stranded 5'-TTAGGG-3' repeats via its interaction with TERF2. Independently of its function in telomeres, also acts as a transcription regulator: recruited to extratelomeric 5'-TTAGGG-3' sites via its association with TERF2 or other factors, and regulates gene expression. When cytoplasmic, associates with the I-kappa-B-kinase (IKK) complex and acts as a regulator of the NF-kappa-B signaling by promoting IKK-mediated phosphorylation of RELA/p65, leading to activate expression of NF-kappa-B target genes. The sequence is that of Telomeric repeat-binding factor 2-interacting protein 1 (Terf2ip) from Mus musculus (Mouse).